Reading from the N-terminus, the 464-residue chain is Isthmin-1 (464 aa).

A signal peptide spans 1–29 (MVRLAAELLLLLGLLLLTLHITVLRGSGA). N39 carries an N-linked (GlcNAc...) asparagine glycan. Disordered regions lie at residues 50–98 (NVGS…LQRD), 135–155 (PDSE…SVPS), and 173–219 (SGDQ…STDG). Positions 51 to 63 (VGSDTTSETSFSL) are enriched in polar residues. 2 stretches are compositionally biased toward basic and acidic residues: residues 66 to 76 (EAPREHLDHQA) and 138 to 147 (EADKDQHPEN). In terms of domain architecture, TSP type-1 spans 218–262 (DGEGDWSLWSVCSVTCGNGNQKRTRSCGYACTATESRTCDRPNCP). Intrachain disulfides connect C229–C256, C233–C261, and C244–C248. The 164-residue stretch at 289 to 452 (LFEVDTDSCE…QKCTESPSDE (164 aa)) folds into the AMOP domain.

Belongs to the isthmin family. Interacts with integrin ITGAV/ITGB5.

The protein localises to the secreted. Acts as an angiogenesis inhibitor. In Homo sapiens (Human), this protein is Isthmin-1 (ISM1).